The chain runs to 142 residues: MFQGASALTLDAKGRMSVPSRYREALQGQAEGRVTVTKHPDGCLLLFPRPEWEVFRAKIAALPMDAHWWRRIFLGNAMDVDLDSAGRILVSPELRMAAGLEKEVMLLGMGSHFELWDSQTYIAKEQAAMAQGMPDALKNFTF.

SpoVT-AbrB domains are found at residues 5–51 (ASAL…PRPE) and 77–120 (AMDV…DSQT).

The protein belongs to the MraZ family. In terms of assembly, forms oligomers.

It localises to the cytoplasm. The protein localises to the nucleoid. The chain is Transcriptional regulator MraZ from Burkholderia ambifaria (strain MC40-6).